The following is a 442-amino-acid chain: Coiled-coil domain-containing protein 112 (442 aa).

Coiled coils occupy residues 23-116 and 217-249; these read LEEL…RRIE and LEEKKKESIQNWKTKKQQKKEEILKLKEKVDTV. Disordered regions lie at residues 245 to 272, 289 to 312, and 392 to 442; these read KVDTVPLPSQSKAEDSPKQREEQRKKQK, KLASQLREEEEKERKQQRERQRQS, and EKVE…RQGI. Composition is skewed to basic and acidic residues over residues 256–268 and 294–310; these read KAEDSPKQREEQR and LREEEEKERKQQRERQR. A coiled-coil region spans residues 281 to 400; it reads RKSLEMSAKL…KEKVENNVSR (120 aa).

It is found in the cytoplasm. The protein localises to the cytoskeleton. The protein resides in the microtubule organizing center. It localises to the centrosome. Its subcellular location is the centriolar satellite. In Mus musculus (Mouse), this protein is Coiled-coil domain-containing protein 112 (Ccdc112).